The primary structure comprises 447 residues: Trigger factor (447 aa).

One can recognise a PPIase FKBP-type domain in the interval 164 to 249 (GNQVTFDFEG…VKLVEKSKLP (86 aa)).

The protein belongs to the FKBP-type PPIase family. Tig subfamily.

It is found in the cytoplasm. It carries out the reaction [protein]-peptidylproline (omega=180) = [protein]-peptidylproline (omega=0). In terms of biological role, involved in protein export. Acts as a chaperone by maintaining the newly synthesized protein in an open conformation. Functions as a peptidyl-prolyl cis-trans isomerase. This is Trigger factor from Psychrobacter arcticus (strain DSM 17307 / VKM B-2377 / 273-4).